A 506-amino-acid chain; its full sequence is ATP synthase subunit alpha (506 aa).

Gly170–Thr177 is a binding site for ATP.

This sequence belongs to the ATPase alpha/beta chains family. F-type ATPases have 2 components, CF(1) - the catalytic core - and CF(0) - the membrane proton channel. CF(1) has five subunits: alpha(3), beta(3), gamma(1), delta(1), epsilon(1). CF(0) has four main subunits: a(1), b(1), b'(1) and c(9-12).

It is found in the cellular thylakoid membrane. The enzyme catalyses ATP + H2O + 4 H(+)(in) = ADP + phosphate + 5 H(+)(out). Functionally, produces ATP from ADP in the presence of a proton gradient across the membrane. The alpha chain is a regulatory subunit. The protein is ATP synthase subunit alpha of Synechococcus sp. (strain CC9605).